Here is a 1082-residue protein sequence, read N- to C-terminus: Transcription elongation factor SPT5 (1082 aa).

Acidic residues predominate over residues 1 to 28 (MSDSEDSNFSEEEDSERSSEAEEAEVEE). The tract at residues 1-88 (MSDSEDSNFS…DVDDEYEDED (88 aa)) is disordered. 2 positions are modified to phosphoserine: Ser-32 and Ser-36. Composition is skewed to acidic residues over residues 38 to 62 (KEEE…EDDD) and 76 to 88 (DEAD…EDED). Lys-141 participates in a covalent cross-link: Glycyl lysine isopeptide (Lys-Gly) (interchain with G-Cter in SUMO2). The tract at residues 174-268 (DPNLWTVKCK…TDVLKVVKEV (95 aa)) is interaction with SUPT4H1 and SUPT4H2. The KOW 1 domain maps to 271-304 (LKPKSWVRLKRGIYKDDIAQVDYVEPSQNTISLK). Residues 311-418 (YDRIKARMSL…STGKEREHNF (108 aa)) are interaction with RNA polymerase II. Residues 326 to 332 (KRKKFKR) carry the UBR5-degron motif. KOW domains lie at 418–449 (FQPG…ITIM) and 470–501 (FKMG…VILF). Lys-577 is a binding site for RNA. The KOW 4 domain occupies 592-625 (IHVKDIVKVIDGPHSGREGEIRHLYRSFAFLHCK). Arg-617 lines the DNA pocket. The residue at position 661 (Thr-661) is a Phosphothreonine. 2 positions are modified to phosphoserine: Ser-664 and Ser-684. The interval 669-694 (SPMHPSAEGQHGGFGSPGGMSRGRGR) is disordered. A compositionally biased stretch (gly residues) spans 678–690 (QHGGFGSPGGMSR). 2 positions are modified to asymmetric dimethylarginine; alternate: Arg-690 and Arg-692. Omega-N-methylarginine; alternate occurs at positions 690 and 692. Position 692 is a symmetric dimethylarginine; alternate (Arg-692). A KOW 5 domain is found at 698–731 (ELIGQTVRISQGPYKGYIGVVKDATESTARVELH). Lys-712 is modified (N6-acetyllysine). Over residues 741–801 (RQRLTTVDSQ…RTPHYGSQTP (61 aa)) the composition is skewed to polar residues. The interval 741–972 (RQRLTTVDSQ…GSGIEQNSSD (232 aa)) is disordered. Residues 748–753 (DSQRPG) form a CTR1-1; approximate repeat. Positions 748–811 (DSQRPGGMTS…LHDGSRTPAQ (64 aa)) are 9 X 7 AA approximate tandem repeats of G-S-[QR]-T-P-X-[YQ], motif CTR1. The CTR1-2 repeat unit spans residues 754-759 (GMTSTY). The CTR1-3 repeat unit spans residues 760–765 (GRTPMY). A CTR1-4 repeat occupies 766–772 (GSQTPMY). Residues Thr-769 and Thr-778 each carry the phosphothreonine; by CDK9 modification. The stretch at 775-781 (GSRTPMY) is one CTR1-5 repeat. The stretch at 782–788 (GSQTPLQ) is one CTR1-6 repeat. Residue Ser-783 is modified to Phosphoserine. A phosphothreonine mark is found at Thr-785 and Thr-793. The CTR1-7 repeat unit spans residues 790 to 796 (GSRTPHY). The CTR1-8 repeat unit spans residues 797-803 (GSQTPLH). Ser-798 bears the Phosphoserine mark. Residues Thr-800 and Thr-808 each carry the phosphothreonine modification. One copy of the CTR1-9 repeat lies at 805 to 811 (GSRTPAQ). Positions 828–838 (EEYEYAFDDEP) are enriched in acidic residues. Residues 838–845 (PTPSPQAY) form a CTR2-1 repeat. The interval 838 to 944 (PTPSPQAYGG…ASPSPSPVGY (107 aa)) is 10 X 8 AA approximate tandem repeats of P-[TS]-P-S-P-[QA]-[SG]-Y, motif CTR2. One copy of the CTR2-2; approximate repeat lies at 848–856 (TPNPQTPGY). A compositionally biased stretch (pro residues) spans 851–860 (PQTPGYPDPS). A CTR2-3; approximate repeat occupies 857-863 (PDPSSPQ). Positions 861-884 (SPQVNPQYNPQTPGTPAMYNTDQF) are enriched in polar residues. The stretch at 875-879 (TPAMY) is one CTR2-4; half-length repeat. The stretch at 890-896 (PSPQGSY) is one CTR2-5; approximate repeat. Low complexity predominate over residues 890-905 (PSPQGSYQPSPSPQSY). Residues 898-905 (PSPSPQSY) form a CTR2-6 repeat. The stretch at 910-915 (PSPAGY) is one CTR2-7; approximate repeat. The stretch at 918–924 (THSPASY) is one CTR2-8 repeat. Residues 926-933 (PTPSPMAY) form a CTR2-9 repeat. Residues 937–944 (PSPSPVGY) form a CTR2-10 repeat. Thr-1028 is modified (phosphothreonine). Lys-1031 participates in a covalent cross-link: Glycyl lysine isopeptide (Lys-Gly) (interchain with G-Cter in SUMO2).

The protein belongs to the SPT5 family. As to quaternary structure, interacts with SUPT4H1 to form DSIF. DSIF interacts with the positive transcription elongation factor b complex (P-TEFb complex), which is composed of CDK9 and cyclin-T (CCNT1 or CCNT2). DSIF interacts with RNA polymerase II, and this interaction is reduced by phosphorylation of the C-terminal domain (CTD) of POLR2A by P-TEFb. DSIF also interacts with the NELF complex, which is composed of NELFA, NELFB, NELFD and NELFE, and this interaction occurs following prior binding of DSIF to RNA polymerase II. Also interacts with PRMT1/HRMT1L2, HTATSF1/TATSF1, RNGTT/CAP1A, PRMT5/SKB1, SUPT6H, and can interact with PIN1. Component of a complex which is at least composed of HTATSF1/Tat-SF1, the P-TEFb complex components CDK9 and CCNT1, RNA polymerase II, SUPT5H, and NCL/nucleolin. Interacts with MCM3AP. In terms of processing, methylated by PRMT1/HRMT1L2 and PRMT5/SKB1. Methylation negatively regulates interaction with P-TEFb and RNA polymerase II. Phosphorylated by CDK7 and CDK9. Phosphorylation by P-TEFb (CDK9) at Thr residues of the C-terminal repeats alleviates transcriptional pausing and promotes transcription elongation. Dephosphorylated by the INTAC complex when transcripts are unfavorably configured for transcriptional elongation, leading to premature transcription termination: dephosphorylation is mediated by the PPP2CA component of the INTAC complex. Dephosphorylated by the PNUTS-PP1 complex in termination zones downstream of poly(A) sites, thereby promoting deceleration of RNA polymerase II transcription. Dephosphorylated by the PNUTS-PP1 complex in termination zones downstream of poly(A) sites, thereby promoting deceleration of RNA polymerase II transcription. Phosphorylation may also stimulate interaction with PIN1. Bulk phosphorylation occurs predominantly in mitosis. Post-translationally, ubiquitinated by UBR5 when not assembled in the DSIF complex, leading to its degradation: UBR5 recognizes and binds a degron that is not accessible when SUPT5H is part of the DSIF complex.

The protein resides in the nucleus. In terms of biological role, component of the DRB sensitivity-inducing factor complex (DSIF complex), which regulates mRNA processing and transcription elongation by RNA polymerase II. DSIF positively regulates mRNA capping by stimulating the mRNA guanylyltransferase activity of RNGTT/CAP1A. DSIF also acts cooperatively with the negative elongation factor complex (NELF complex) to enhance transcriptional pausing at sites proximal to the promoter. Transcriptional pausing may facilitate the assembly of an elongation competent RNA polymerase II complex. DSIF and NELF promote pausing by inhibition of the transcription elongation factor TFIIS/S-II. TFIIS/S-II binds to RNA polymerase II at transcription pause sites and stimulates the weak intrinsic nuclease activity of the enzyme. Cleavage of blocked transcripts by RNA polymerase II promotes the resumption of transcription from the new 3' terminus and may allow repeated attempts at transcription through natural pause sites. Following phosphorylation by CDK9, DSIF can also positively regulate transcriptional elongation. This is Transcription elongation factor SPT5 (Supt5h) from Mus musculus (Mouse).